The sequence spans 503 residues: ATP synthase subunit alpha (503 aa).

Position 170 to 177 (170 to 177 (GDRKTGKT)) interacts with ATP.

The protein belongs to the ATPase alpha/beta chains family. In terms of assembly, F-type ATPases have 2 components, CF(1) - the catalytic core - and CF(0) - the membrane proton channel. CF(1) has five subunits: alpha(3), beta(3), gamma(1), delta(1), epsilon(1). CF(0) has four main subunits: a, b, b' and c.

The protein resides in the cellular thylakoid membrane. The enzyme catalyses ATP + H2O + 4 H(+)(in) = ADP + phosphate + 5 H(+)(out). Produces ATP from ADP in the presence of a proton gradient across the membrane. The alpha chain is a regulatory subunit. The chain is ATP synthase subunit alpha from Rippkaea orientalis (strain PCC 8801 / RF-1) (Cyanothece sp. (strain PCC 8801)).